Here is a 452-residue protein sequence, read N- to C-terminus: Pup--protein ligase (452 aa).

Mg(2+) is bound at residue Glu9. An ATP-binding site is contributed by Arg53. Mg(2+) is bound at residue Tyr55. The active-site Proton acceptor is Asp57. Glu63 is a Mg(2+) binding site. ATP contacts are provided by Thr66 and Trp419.

Belongs to the Pup ligase/Pup deamidase family. Pup-conjugating enzyme subfamily.

It catalyses the reaction ATP + [prokaryotic ubiquitin-like protein]-L-glutamate + [protein]-L-lysine = ADP + phosphate + N(6)-([prokaryotic ubiquitin-like protein]-gamma-L-glutamyl)-[protein]-L-lysine.. It functions in the pathway protein degradation; proteasomal Pup-dependent pathway. Its pathway is protein modification; protein pupylation. Catalyzes the covalent attachment of the prokaryotic ubiquitin-like protein modifier Pup to the proteasomal substrate proteins, thereby targeting them for proteasomal degradation. This tagging system is termed pupylation. The ligation reaction involves the side-chain carboxylate of the C-terminal glutamate of Pup and the side-chain amino group of a substrate lysine. This chain is Pup--protein ligase, found in Salinispora tropica (strain ATCC BAA-916 / DSM 44818 / JCM 13857 / NBRC 105044 / CNB-440).